The chain runs to 291 residues: Ribosome maturation factor RimP (291 aa).

Residues 188–291 (ERGLGEDEEF…GGKPKAKETH (104 aa)) form a disordered region. Acidic residues predominate over residues 193–211 (EDEEFEDDADEVFEGDEAD). Basic and acidic residues-rich tracts occupy residues 212-237 (EKAA…EKRA) and 245-254 (AKSEKAEKSQ).

The protein belongs to the RimP family.

The protein localises to the cytoplasm. Functionally, required for maturation of 30S ribosomal subunits. The protein is Ribosome maturation factor RimP of Azorhizobium caulinodans (strain ATCC 43989 / DSM 5975 / JCM 20966 / LMG 6465 / NBRC 14845 / NCIMB 13405 / ORS 571).